The primary structure comprises 120 residues: Large ribosomal subunit protein uL22 (120 aa).

It belongs to the universal ribosomal protein uL22 family. As to quaternary structure, part of the 50S ribosomal subunit.

This protein binds specifically to 23S rRNA; its binding is stimulated by other ribosomal proteins, e.g. L4, L17, and L20. It is important during the early stages of 50S assembly. It makes multiple contacts with different domains of the 23S rRNA in the assembled 50S subunit and ribosome. In terms of biological role, the globular domain of the protein is located near the polypeptide exit tunnel on the outside of the subunit, while an extended beta-hairpin is found that lines the wall of the exit tunnel in the center of the 70S ribosome. The chain is Large ribosomal subunit protein uL22 from Corynebacterium urealyticum (strain ATCC 43042 / DSM 7109).